The sequence spans 185 residues: Alkyl hydroperoxide reductase AhpD (185 aa).

Cys-132 serves as the catalytic Proton donor. A disulfide bridge links Cys-132 with Cys-135. Cys-135 serves as the catalytic Cysteine sulfenic acid (-SOH) intermediate.

Belongs to the AhpD family.

The enzyme catalyses N(6)-[(R)-dihydrolipoyl]-L-lysyl-[lipoyl-carrier protein] + a hydroperoxide = N(6)-[(R)-lipoyl]-L-lysyl-[lipoyl-carrier protein] + an alcohol + H2O. In terms of biological role, antioxidant protein with alkyl hydroperoxidase activity. Required for the reduction of the AhpC active site cysteine residues and for the regeneration of the AhpC enzyme activity. This is Alkyl hydroperoxide reductase AhpD from Anaeromyxobacter sp. (strain Fw109-5).